Consider the following 108-residue polypeptide: uncharacterized protein (108 aa).

A helical membrane pass occupies residues 59 to 81 (NIVIILWKIMVVIISSIIHRTYI).

Its subcellular location is the membrane. This is an uncharacterized protein from Rickettsia conorii (strain ATCC VR-613 / Malish 7).